The primary structure comprises 364 residues: DNA polymerase IV (364 aa).

Positions 14–198 (IIHIDMDAFF…LPIEKFHGVG (185 aa)) constitute a UmuC domain. Mg(2+) is bound by residues D18 and D116. Residue E117 is part of the active site.

This sequence belongs to the DNA polymerase type-Y family. Monomer. Mg(2+) serves as cofactor.

The protein resides in the cytoplasm. The enzyme catalyses DNA(n) + a 2'-deoxyribonucleoside 5'-triphosphate = DNA(n+1) + diphosphate. In terms of biological role, poorly processive, error-prone DNA polymerase involved in untargeted mutagenesis. Copies undamaged DNA at stalled replication forks, which arise in vivo from mismatched or misaligned primer ends. These misaligned primers can be extended by PolIV. Exhibits no 3'-5' exonuclease (proofreading) activity. May be involved in translesional synthesis, in conjunction with the beta clamp from PolIII. The chain is DNA polymerase IV from Streptococcus pyogenes serotype M12 (strain MGAS2096).